The sequence spans 419 residues: Serine hydroxymethyltransferase (419 aa).

Residues Leu121 and 125 to 127 (GHL) contribute to the (6S)-5,6,7,8-tetrahydrofolate site. Position 229 is an N6-(pyridoxal phosphate)lysine (Lys229). 354 to 356 (SPF) is a (6S)-5,6,7,8-tetrahydrofolate binding site.

It belongs to the SHMT family. In terms of assembly, homodimer. The cofactor is pyridoxal 5'-phosphate.

Its subcellular location is the cytoplasm. The catalysed reaction is (6R)-5,10-methylene-5,6,7,8-tetrahydrofolate + glycine + H2O = (6S)-5,6,7,8-tetrahydrofolate + L-serine. Its pathway is one-carbon metabolism; tetrahydrofolate interconversion. It participates in amino-acid biosynthesis; glycine biosynthesis; glycine from L-serine: step 1/1. Functionally, catalyzes the reversible interconversion of serine and glycine with tetrahydrofolate (THF) serving as the one-carbon carrier. This reaction serves as the major source of one-carbon groups required for the biosynthesis of purines, thymidylate, methionine, and other important biomolecules. Also exhibits THF-independent aldolase activity toward beta-hydroxyamino acids, producing glycine and aldehydes, via a retro-aldol mechanism. This Coxiella burnetii (strain RSA 331 / Henzerling II) protein is Serine hydroxymethyltransferase.